The sequence spans 369 residues: UDP-N-acetylglucosamine--N-acetylmuramyl-(pentapeptide) pyrophosphoryl-undecaprenol N-acetylglucosamine transferase (369 aa).

UDP-N-acetyl-alpha-D-glucosamine contacts are provided by residues threonine 10–glycine 12, asparagine 124, serine 195, isoleucine 252, and glutamine 297.

Belongs to the glycosyltransferase 28 family. MurG subfamily.

It localises to the cell membrane. It catalyses the reaction Mur2Ac(oyl-L-Ala-gamma-D-Glu-L-Lys-D-Ala-D-Ala)-di-trans,octa-cis-undecaprenyl diphosphate + UDP-N-acetyl-alpha-D-glucosamine = beta-D-GlcNAc-(1-&gt;4)-Mur2Ac(oyl-L-Ala-gamma-D-Glu-L-Lys-D-Ala-D-Ala)-di-trans,octa-cis-undecaprenyl diphosphate + UDP + H(+). Its pathway is cell wall biogenesis; peptidoglycan biosynthesis. Cell wall formation. Catalyzes the transfer of a GlcNAc subunit on undecaprenyl-pyrophosphoryl-MurNAc-pentapeptide (lipid intermediate I) to form undecaprenyl-pyrophosphoryl-MurNAc-(pentapeptide)GlcNAc (lipid intermediate II). The chain is UDP-N-acetylglucosamine--N-acetylmuramyl-(pentapeptide) pyrophosphoryl-undecaprenol N-acetylglucosamine transferase from Leuconostoc citreum (strain KM20).